The primary structure comprises 990 residues: Pro-apoptotic serine protease NMA111 (990 aa).

The disordered stretch occupies residues Met-1 to Thr-32. The interval Val-73–Leu-263 is serine protease. Active-site charge relay system residues include His-111, Asp-142, and Ser-225. PDZ domains lie at Arg-290–Gly-368 and Ser-758–Gly-843.

It belongs to the peptidase S1C family.

It localises to the nucleus. Its function is as follows. Nuclear serine protease which mediates apoptosis. In Vanderwaltozyma polyspora (strain ATCC 22028 / DSM 70294 / BCRC 21397 / CBS 2163 / NBRC 10782 / NRRL Y-8283 / UCD 57-17) (Kluyveromyces polysporus), this protein is Pro-apoptotic serine protease NMA111 (NMA111).